The following is a 197-amino-acid chain: Rac-like GTP-binding protein ARAC6 (197 aa).

Position 13-20 (13-20 (GDGAVGKT)) interacts with GTP. The short motif at 35-43 (YVPTVFDNF) is the Effector region element. GTP contacts are provided by residues 60 to 64 (DTAGQ) and 118 to 121 (TKLD). S160 contacts GDP. C194 is subject to Cysteine methyl ester. A lipid anchor (S-geranylgeranyl cysteine) is attached at C194. Residues 195-197 (SIL) constitute a propeptide, removed in mature form.

It belongs to the small GTPase superfamily. Rho family. Interacts with SPK1. Ubiquitous. Preferentially expressed in mature pollen and pollen tubes.

It is found in the cytoplasm. The protein resides in the membrane. Its function is as follows. May be involved in cell polarity control during the actin-dependent tip growth of pollen tubes. Inactive GDP-bound Rho GTPases reside in the cytosol, are found in a complex with Rho GDP-dissociation inhibitors (Rho GDIs), and are released from the GDI protein in order to translocate to membranes upon activation. The chain is Rac-like GTP-binding protein ARAC6 (ARAC6) from Arabidopsis thaliana (Mouse-ear cress).